Consider the following 463-residue polypeptide: tRNA-2-methylthio-N(6)-dimethylallyladenosine synthase (463 aa).

Residues 18–136 (RKLYIETYGC…LPNLVGAAEQ (119 aa)) enclose the MTTase N-terminal domain. Residues C27, C63, C100, C174, C178, and C181 each coordinate [4Fe-4S] cluster. Residues 160 to 392 (GGVHINGFVS…IALQNRLSEE (233 aa)) form the Radical SAM core domain. The 64-residue stretch at 395–458 (KRDIGKTFEV…SATLFGEVVE (64 aa)) folds into the TRAM domain.

Belongs to the methylthiotransferase family. MiaB subfamily. Monomer. [4Fe-4S] cluster is required as a cofactor.

Its subcellular location is the cytoplasm. The enzyme catalyses N(6)-dimethylallyladenosine(37) in tRNA + (sulfur carrier)-SH + AH2 + 2 S-adenosyl-L-methionine = 2-methylsulfanyl-N(6)-dimethylallyladenosine(37) in tRNA + (sulfur carrier)-H + 5'-deoxyadenosine + L-methionine + A + S-adenosyl-L-homocysteine + 2 H(+). In terms of biological role, catalyzes the methylthiolation of N6-(dimethylallyl)adenosine (i(6)A), leading to the formation of 2-methylthio-N6-(dimethylallyl)adenosine (ms(2)i(6)A) at position 37 in tRNAs that read codons beginning with uridine. This Porphyromonas gingivalis (strain ATCC BAA-308 / W83) protein is tRNA-2-methylthio-N(6)-dimethylallyladenosine synthase.